The chain runs to 2670 residues: Inositol 1,4,5-trisphosphate-gated calcium channel ITPR3 (2670 aa).

Topologically, residues 1-2233 (MNEMSSFLHI…YVEGASTGVL (2233 aa)) are cytoplasmic. 5 consecutive MIR domains span residues 113 to 173 (GDVV…LRSN), 174 to 224 (GDNV…INLF), 232 to 288 (EEVL…VEVV), 295 to 372 (GGAG…LDPT), and 378 to 434 (DSFV…IVSV). 1D-myo-inositol 1,4,5-trisphosphate contacts are provided by arginine 266, leucine 269, and arginine 270. 1D-myo-inositol 1,4,5-trisphosphate-binding residues include arginine 503, lysine 507, arginine 510, tyrosine 567, arginine 568, and lysine 569. Arginine 743 is a binding site for Ca(2+). A phosphoserine mark is found at serine 916 and serine 934. 2 residues coordinate Ca(2+): glutamate 1122 and glutamate 1125. Basic and acidic residues predominate over residues 1138–1153 (EVEAGATKDKKERPSD). 2 disordered regions span residues 1138–1164 (EVEA…HGEK) and 1807–1835 (NMSD…SFSM). 3 positions are modified to phosphoserine: serine 1813, serine 1832, and serine 1834. Ca(2+) is bound by residues glutamate 1881 and glutamate 1945. Alanine 1995, glutamate 2148, and lysine 2151 together coordinate ATP. A helical transmembrane segment spans residues 2234–2254 (GSPLISLLFWILICFSIAALF). At 2255–2262 (TKRYSVRP) the chain is on the extracellular side. The helical transmembrane segment at 2263 to 2283 (LIVALILRSIYYLGIGPTLNI) threads the bilayer. The Cytoplasmic segment spans residues 2284–2292 (LGALNLTNK). Residues 2293–2310 (IVFVVSFVGNRGTFIRGY) traverse the membrane as a helical segment. The Extracellular segment spans residues 2311 to 2324 (KAMVMDMEFLYHVG). A helical transmembrane segment spans residues 2325–2345 (YILTSVLGLFAHELFYSILLF). Topologically, residues 2346–2367 (DLIYREETLFNVIKSVTRNGRS) are cytoplasmic. A helical membrane pass occupies residues 2368 to 2388 (ILLTALLALILVYLFSIVGFL). The Extracellular portion of the chain corresponds to 2389 to 2495 (FLKDDFILEV…ESLFPARVVY (107 aa)). Cysteines 2454 and 2460 form a disulfide. Residues 2496 to 2516 (DLLFFFIVIIIVLNLIFGVII) form a helical membrane-spanning segment. The Cytoplasmic segment spans residues 2517–2670 (DTFADLRSEK…FVDVQNCMSR (154 aa)). ATP-binding residues include cysteine 2537 and phenylalanine 2538. Cysteine 2537 provides a ligand contact to Zn(2+). Zn(2+)-binding residues include cysteine 2540 and histidine 2557. 4 residues coordinate ATP: lysine 2559, histidine 2562, asparagine 2563, and methionine 2564. Histidine 2562 contacts Zn(2+). Residue threonine 2580 coordinates Ca(2+). A phosphoserine mark is found at serine 2608 and serine 2669.

Belongs to the InsP3 receptor family. In terms of assembly, homodimer. Homotetramer. Interacts with TRPC1, TRPC3, TRPC4. Interacts with TRPV4. Interacts with SIGMAR1. Found in a complex with AKT1 and PML; this interaction modulates IP3R3-phosphorylation and in turn ITPR3-dependent calcium release. Interacts with IRAG2 (via coiled-coil domain). Interacts with CABP1. Interacts with TMBIM4/LFG4. Interacts with CEMIP. Interacts with TESPA1. Interacts with TMEM203. Interacts with BOK; regulates ITPR3 expression. Interacts with BCL2L10. Interacts with CHGA and CHGB. In terms of processing, phosphorylated by AKT1 on serine and/or threonine residues.

It localises to the endoplasmic reticulum membrane. The protein localises to the cytoplasmic vesicle. It is found in the secretory vesicle membrane. It catalyses the reaction Ca(2+)(in) = Ca(2+)(out). Inositol 1,4,5-trisphosphate-gated calcium channel is regulated by cytosolic calcium in a biphasic manner. At low concentrations, cytosolic calcium binds at a high-affinity juxtamembrane domain (JD) calcium binding site, allowing ITPR3 to activate by escaping a low-energy resting state through an ensemble of preactivated states. At high cytosolic calcium concentrations, ITPR3 preferentially enters an inhibited state stabilized by calcium binding at a second, low-affinity cytoplasmic domain (CD) calcium binding site. Functionally, inositol 1,4,5-trisphosphate-gated calcium channel that, upon 1D-myo-inositol 1,4,5-trisphosphate binding, transports calcium from the endoplasmic reticulum lumen to cytoplasm, thus releasing the intracellular calcium and therefore participates in cellular calcium ion homeostasis. 1D-myo-inositol 1,4,5-trisphosphate binds to the ligand-free channel without altering its global conformation, yielding the low-energy resting state, then progresses through resting-to preactivated transitions to the higher energy preactivated state, which increases affinity for calcium, promoting binding of the low basal cytosolic calcium at the juxtamembrane domain (JD) site, favoring the transition through the ensemble of high-energy intermediate states along the trajectory to the fully-open activated state. Upon opening, releases calcium in the cytosol where it can bind to the low-affinity cytoplasmic domain (CD) site and stabilizes the inhibited state to terminate calcium release. This Mus musculus (Mouse) protein is Inositol 1,4,5-trisphosphate-gated calcium channel ITPR3.